The chain runs to 352 residues: Selenide, water dikinase (352 aa).

C21 is an active-site residue. Residues K24 and 51 to 53 each bind ATP; that span reads TND. D54 serves as a coordination point for Mg(2+). Residues D71, D94, and 141-143 each bind ATP; that span reads GHS. D94 is a binding site for Mg(2+). D231 contributes to the Mg(2+) binding site.

The protein belongs to the selenophosphate synthase 1 family. Class I subfamily. Homodimer. Requires Mg(2+) as cofactor.

It carries out the reaction hydrogenselenide + ATP + H2O = selenophosphate + AMP + phosphate + 2 H(+). Its function is as follows. Synthesizes selenophosphate from selenide and ATP. The chain is Selenide, water dikinase from Myxococcus xanthus (strain DK1622).